The following is a 567-amino-acid chain: Proline--tRNA ligase (567 aa).

This sequence belongs to the class-II aminoacyl-tRNA synthetase family. ProS type 1 subfamily. As to quaternary structure, homodimer.

It is found in the cytoplasm. The enzyme catalyses tRNA(Pro) + L-proline + ATP = L-prolyl-tRNA(Pro) + AMP + diphosphate. Functionally, catalyzes the attachment of proline to tRNA(Pro) in a two-step reaction: proline is first activated by ATP to form Pro-AMP and then transferred to the acceptor end of tRNA(Pro). As ProRS can inadvertently accommodate and process non-cognate amino acids such as alanine and cysteine, to avoid such errors it has two additional distinct editing activities against alanine. One activity is designated as 'pretransfer' editing and involves the tRNA(Pro)-independent hydrolysis of activated Ala-AMP. The other activity is designated 'posttransfer' editing and involves deacylation of mischarged Ala-tRNA(Pro). The misacylated Cys-tRNA(Pro) is not edited by ProRS. The sequence is that of Proline--tRNA ligase from Staphylococcus aureus (strain MRSA252).